Here is a 304-residue protein sequence, read N- to C-terminus: Nod factor export ATP-binding protein I (304 aa).

An ABC transporter domain is found at 6 to 236 (IDFQQVEKRY…EIGCDVIEIY (231 aa)). An ATP-binding site is contributed by 38–45 (GPNGAGKT).

It belongs to the ABC transporter superfamily. Lipooligosaccharide exporter (TC 3.A.1.102) family. The complex is composed of two ATP-binding proteins (NodI) and two transmembrane proteins (NodJ).

The protein localises to the cell inner membrane. Functionally, part of the ABC transporter complex NodIJ involved in the export of the nodulation factors (Nod factors), the bacterial signal molecules that induce symbiosis and subsequent nodulation induction. Nod factors are LCO (lipo-chitin oligosaccharide), a modified beta-1,4-linked N-acetylglucosamine oligosaccharide. This subunit is responsible for energy coupling to the transport system. The protein is Nod factor export ATP-binding protein I of Burkholderia pseudomallei (strain 1710b).